Consider the following 437-residue polypeptide: Probable glycine dehydrogenase (decarboxylating) subunit 1 (437 aa).

This sequence belongs to the GcvP family. N-terminal subunit subfamily. In terms of assembly, the glycine cleavage system is composed of four proteins: P, T, L and H. In this organism, the P 'protein' is a heterodimer of two subunits.

It carries out the reaction N(6)-[(R)-lipoyl]-L-lysyl-[glycine-cleavage complex H protein] + glycine + H(+) = N(6)-[(R)-S(8)-aminomethyldihydrolipoyl]-L-lysyl-[glycine-cleavage complex H protein] + CO2. In terms of biological role, the glycine cleavage system catalyzes the degradation of glycine. The P protein binds the alpha-amino group of glycine through its pyridoxal phosphate cofactor; CO(2) is released and the remaining methylamine moiety is then transferred to the lipoamide cofactor of the H protein. This chain is Probable glycine dehydrogenase (decarboxylating) subunit 1, found in Thermotoga maritima (strain ATCC 43589 / DSM 3109 / JCM 10099 / NBRC 100826 / MSB8).